Reading from the N-terminus, the 213-residue chain is MAGAMRKMAVYLGLVEDDGYDGRGFDPDDDFEPELDPEPERDRRRHEPPHQSHQALHPQRDESVRVVQPPMQRDPVPHSASLPAESVRPARIAPVASITQERQSLEKNAPVIMPKVVSEREPYRITTLHPRTYNEARTIGEHFREGTPVIMNLTEMDDTDAKRLVDFAAGLVFGLHGSIERVTQKVFLLSPANVDVTAEDKARIAEGGFFNQS.

Residues 16 to 63 (EDDGYDGRGFDPDDDFEPELDPEPERDRRRHEPPHQSHQALHPQRDES) are disordered. Positions 27 to 39 (PDDDFEPELDPEP) are enriched in acidic residues.

This sequence belongs to the SepF family. In terms of assembly, homodimer. Interacts with FtsZ.

The protein localises to the cytoplasm. In terms of biological role, cell division protein that is part of the divisome complex and is recruited early to the Z-ring. Probably stimulates Z-ring formation, perhaps through the cross-linking of FtsZ protofilaments. Its function overlaps with FtsA. The sequence is that of Cell division protein SepF 2 from Streptomyces avermitilis (strain ATCC 31267 / DSM 46492 / JCM 5070 / NBRC 14893 / NCIMB 12804 / NRRL 8165 / MA-4680).